The chain runs to 179 residues: Signal peptidase complex subunit 2 (179 aa).

Over 1 to 48 (MSGNNVQEEDSTFHVSNLYSETEIKKITQDFISEKIREQNFEEIVKYS) the chain is Cytoplasmic. The chain crosses the membrane as a helical span at residues 49 to 69 (NIRIFLSLVLIVIGTYCSIFV). At 70–74 (QYKKN) the chain is on the extracellular side. The helical transmembrane segment at 75 to 95 (PVIMIQLLVAFFVVSTTLIIF) threads the bilayer. The Cytoplasmic portion of the chain corresponds to 96-179 (EYFFFDDVFM…AHGRTLKLKN (84 aa)).

The protein belongs to the SPCS2 family. In terms of assembly, component of the signal peptidase complex (SPC) composed of a catalytic subunit SEC11/SPC21 and three accessory subunits SPC25, SPC3/SPC22, SPC1/SPC12. The complex induces a local thinning of the ER membrane which is used to measure the length of the signal peptide (SP) h-region of protein substrates. This ensures the selectivity of the complex towards h-regions shorter than 18-20 amino acids. Within the complex, interacts with SEC11/SPC21. Component of a complex composed of SPC25 and PMV; the interaction is mediated via the transmembrane domains. The complex interacts with the SEC61 channel-forming translocon complex and is involved in the recognition and import of PEXEL motif-containing proteins into the ER for subsequent export.

It localises to the endoplasmic reticulum membrane. Component of the signal peptidase complex (SPC) which catalyzes the cleavage of N-terminal signal sequences from nascent proteins as they are translocated into the lumen of the endoplasmic reticulum. Enhances the enzymatic activity of SPC and facilitates the interactions between different components of the translocation site. Also, regulatory component of the CSP25-plasmepsin PMV complex which cleaves the pentameric localization motif RxLxE/Q/D (termed Plasmodium export element (PEXEL)) located downstream of the N-terminal secretory signal sequence of several proteins. The protein is Signal peptidase complex subunit 2 of Plasmodium falciparum (isolate 3D7).